The sequence spans 533 residues: WD repeat-containing protein PAC11 (533 aa).

Basic and acidic residues predominate over residues 1–19 (MERLKQLEEKRRQLKELRE). Positions 1 to 36 (MERLKQLEEKRRQLKELRERRKQASLFPGSETMGHH) are disordered. WD repeat units lie at residues 380 to 422 (FDEV…YLSL) and 432 to 475 (NHST…AIIG).

As to quaternary structure, interacts with NUM1, when DYN1 is present.

It is found in the cytoplasm. Its subcellular location is the cytoskeleton. In terms of biological role, required for viability in the absence of the kinesin-related CIN8 mitotic motor. May be a dynein intermediate chain. The sequence is that of WD repeat-containing protein PAC11 (PAC11) from Saccharomyces cerevisiae (strain ATCC 204508 / S288c) (Baker's yeast).